The primary structure comprises 256 residues: Pimeloyl-[acyl-carrier protein] methyl ester esterase (256 aa).

Residues 16–240 form the AB hydrolase-1 domain; it reads LVILHGWGVN…PKASHAPFLS (225 aa). Substrate-binding positions include tryptophan 22, 80 to 81, and 143 to 147; these read SL and FLAIQ. Catalysis depends on serine 80, which acts as the Nucleophile. Active-site residues include aspartate 207 and histidine 235. Histidine 235 is a substrate binding site.

The protein belongs to the AB hydrolase superfamily. Carboxylesterase BioH family. As to quaternary structure, monomer.

It localises to the cytoplasm. It carries out the reaction 6-carboxyhexanoyl-[ACP] methyl ester + H2O = 6-carboxyhexanoyl-[ACP] + methanol + H(+). It participates in cofactor biosynthesis; biotin biosynthesis. In terms of biological role, the physiological role of BioH is to remove the methyl group introduced by BioC when the pimeloyl moiety is complete. It allows to synthesize pimeloyl-ACP via the fatty acid synthetic pathway through the hydrolysis of the ester bonds of pimeloyl-ACP esters. In Shewanella woodyi (strain ATCC 51908 / MS32), this protein is Pimeloyl-[acyl-carrier protein] methyl ester esterase.